We begin with the raw amino-acid sequence, 129 residues long: Small ribosomal subunit protein uS11 (129 aa).

Belongs to the universal ribosomal protein uS11 family. In terms of assembly, part of the 30S ribosomal subunit. Interacts with proteins S7 and S18. Binds to IF-3.

Located on the platform of the 30S subunit, it bridges several disparate RNA helices of the 16S rRNA. Forms part of the Shine-Dalgarno cleft in the 70S ribosome. This chain is Small ribosomal subunit protein uS11, found in Chelativorans sp. (strain BNC1).